Consider the following 266-residue polypeptide: Interleukin-1 beta (266 aa).

The propeptide occupies 1–113 (MATVPEPINE…ETSSDEFLCD (113 aa)).

Belongs to the IL-1 family. In terms of assembly, monomer. In its precursor form, weakly interacts with full-length MEFV; the mature cytokine does not interact at all. Interacts with integrins ITGAV:ITGBV and ITGA5:ITGB1; integrin-binding is required for IL1B signaling. Interacts with cargo receptor TMED10; the interaction is direct and is required for the secretion of IL1B mature form. Interacts with HSP90AB1; the interaction facilitates cargo translocation into the ERGIC. Interacts with HSP90B1; the interaction facilitates cargo translocation into the ERGIC.

Its subcellular location is the cytoplasm. It is found in the cytosol. The protein localises to the secreted. The protein resides in the lysosome. It localises to the extracellular exosome. Functionally, potent pro-inflammatory cytokine. Initially discovered as the major endogenous pyrogen, induces prostaglandin synthesis, neutrophil influx and activation, T-cell activation and cytokine production, B-cell activation and antibody production, and fibroblast proliferation and collagen production. Promotes Th17 differentiation of T-cells. Synergizes with IL12/interleukin-12 to induce IFNG synthesis from T-helper 1 (Th1) cells. Plays a role in angiogenesis by inducing VEGF production synergistically with TNF and IL6. Involved in transduction of inflammation downstream of pyroptosis: its mature form is specifically released in the extracellular milieu by passing through the gasdermin-D (GSDMD) pore. The sequence is that of Interleukin-1 beta (IL1B) from Bubalus carabanensis (Swamp type water buffalo).